The primary structure comprises 544 residues: Baeyer-Villiger monooxygenase (544 aa).

FAD contacts are provided by Phe27, Glu47, Trp56, Asp67, Tyr73, and Val119.

Belongs to the FAD-binding monooxygenase family. FAD is required as a cofactor.

Its function is as follows. Catalyzes a Baeyer-Villiger oxidation reaction, i.e. the insertion of an oxygen atom into a carbon-carbon bond adjacent to a carbonyl, which converts ketones to esters or lactones using NADPH as an electron donor. Besides cycloalkanones, can use cyclic alpha,beta-unsaturated ketones as substrates, leading to enol-lactones. Can also act on methylated cycloalkanones and methylated cycloalkenones with high enantioselectivity in some cases. The chain is Baeyer-Villiger monooxygenase from Parvibaculum lavamentivorans (strain DS-1 / DSM 13023 / NCIMB 13966).